The primary structure comprises 108 residues: Glutaredoxin-1 (108 aa).

The Glutaredoxin domain occupies 3-106 (EEFVQQRLAN…DILSSIGVLR (104 aa)). Cysteine 23 and cysteine 26 form a disulfide bridge.

It belongs to the glutaredoxin family.

It localises to the virion. Its function is as follows. Displays thioltransferase and dehydroascorbate reductase activities. This Vaccinia virus (strain Copenhagen) (VACV) protein is Glutaredoxin-1 (OPG075).